The primary structure comprises 461 residues: Tumor necrosis factor receptor superfamily member 1A (461 aa).

Residues 1 to 29 form the signal peptide; sequence MGLPIVPGLLLSLVLLALLMGIHPSGVTG. The Extracellular segment spans residues 30–211; the sequence is LVPSLGDREK…VTNPQDSGTA (182 aa). 4 TNFR-Cys repeats span residues 43-82, 83-125, 126-166, and 167-196; these read LCPQGKYAHPKNNSICCTKCHKGTYLVSDCPSPGQETVCE, VCDK…DTVC, GCKK…NTVC, and NCHAGFFLSGNECTPCSHCKKNQECMKLCL. Intrachain disulfides connect Cys44–Cys58, Cys59–Cys72, Cys62–Cys81, Cys84–Cys99, Cys102–Cys117, Cys105–Cys125, Cys127–Cys143, Cys146–Cys158, Cys149–Cys166, Cys168–Cys179, Cys182–Cys195, and Cys185–Cys191. The N-linked (GlcNAc...) asparagine glycan is linked to Asn54. Asn151 is a glycosylation site (N-linked (GlcNAc...) asparagine). Asn201 carries N-linked (GlcNAc...) asparagine glycosylation. A helical membrane pass occupies residues 212 to 234; that stretch reads VLLPLVIFLGLCLLFFICISLLC. Over 235-461 the chain is Cytoplasmic; sequence RYPQWRPRVY…AHSSTTHLPR (227 aa). The segment at 344–354 is N-SMase activation domain (NSD); that stretch reads VRKWEDVVAAQ. The Death domain occupies 363–448; that stretch reads PAMLYAVVDG…GCLENIRETL (86 aa).

As to quaternary structure, binding of TNF to the extracellular domain leads to homotrimerization. The aggregated death domains provide a novel molecular interface that interacts specifically with the death domain of TRADD. Various TRADD-interacting proteins such as TRAFS, RIPK1 and possibly FADD, are recruited to the complex by their association with TRADD. This complex activates at least two distinct signaling cascades, apoptosis and NF-kappa-B signaling. Interacts with BAG4, BABAM2, FEM1B, GRB2, SQSTM1 and TRPC4AP. Interacts with DAB2IP. Interacts directly with NOL3 (via CARD domain); inhibits TNF-signaling pathway. Interacts with SH3RF2, TRADD and RIPK1. SH3RF2 facilitates the recruitment of RIPK1 and TRADD to TNFRSF1A in a TNF-alpha-dependent process. Interacts with PGLYRP1; this interaction is important for cell death induction. Interacts (via death domain) with MADD (via death domain).

The protein localises to the cell membrane. The protein resides in the golgi apparatus membrane. In terms of biological role, receptor for TNFSF2/TNF-alpha and homotrimeric TNFSF1/lymphotoxin-alpha. The adapter molecule FADD recruits caspase-8 to the activated receptor. The resulting death-inducing signaling complex (DISC) performs caspase-8 proteolytic activation which initiates the subsequent cascade of caspases (aspartate-specific cysteine proteases) mediating apoptosis. This chain is Tumor necrosis factor receptor superfamily member 1A (Tnfrsf1a), found in Rattus norvegicus (Rat).